The sequence spans 423 residues: Sulfate adenylyltransferase (423 aa).

The protein belongs to the sulfate adenylyltransferase family.

It carries out the reaction sulfate + ATP + H(+) = adenosine 5'-phosphosulfate + diphosphate. It participates in sulfur metabolism; hydrogen sulfide biosynthesis; sulfite from sulfate: step 1/3. The chain is Sulfate adenylyltransferase from Desulfovibrio desulfuricans (strain ATCC 27774 / DSM 6949 / MB).